The sequence spans 282 residues: Bifunctional protein FolD (282 aa).

Residues 165–167 (NRS), S190, and I231 contribute to the NADP(+) site.

It belongs to the tetrahydrofolate dehydrogenase/cyclohydrolase family. As to quaternary structure, homodimer.

It carries out the reaction (6R)-5,10-methylene-5,6,7,8-tetrahydrofolate + NADP(+) = (6R)-5,10-methenyltetrahydrofolate + NADPH. The enzyme catalyses (6R)-5,10-methenyltetrahydrofolate + H2O = (6R)-10-formyltetrahydrofolate + H(+). The protein operates within one-carbon metabolism; tetrahydrofolate interconversion. Its function is as follows. Catalyzes the oxidation of 5,10-methylenetetrahydrofolate to 5,10-methenyltetrahydrofolate and then the hydrolysis of 5,10-methenyltetrahydrofolate to 10-formyltetrahydrofolate. This Clostridium botulinum (strain 657 / Type Ba4) protein is Bifunctional protein FolD.